The following is a 136-amino-acid chain: DUF35 domain-containing scaffold protein (136 aa).

Zn(2+) contacts are provided by C25, C38, and C41.

Belongs to the scaffold protein DUF35 family. Interacts with acetoacetyl-CoA thiolase and HMG-CoA synthase (HMGCS) that catalyzes the first and second step in the mevalonate pathway, respectively.

Functionally, functions as a scaffold to connect the acetoacetyl-CoA thiolase and HMG-CoA synthase (HMGCS) dimers in the channeling thiolase/HMGCS complex, which allows for efficient coupling of the endergonic thiolase reaction with the exergonic HMGCS reaction. This Pyrococcus furiosus (strain ATCC 43587 / DSM 3638 / JCM 8422 / Vc1) protein is DUF35 domain-containing scaffold protein.